The primary structure comprises 478 residues: MKTWLMGFSEFLLRYKLVWSETWKIRKQLDTPVREKDENEFLPAHLELIETPVSRRPRLVAYFIMGFLVIAFILSVLGQVEIVATANGKLTHSGRSKEIKPIENSIVKEIIVKEGESVRKGDVLLKLTALGAEADTLKTQSSLLQARLEQTRYQILSRSIELNKLPELKLPDEPYFQNVSEEEVLRLTSLIKEQFSTWQNQKYQKELNLDKKRAERLTVLARINRYENLSRVEKSRLDDFSSLLHKQAIAKHAVLEQENKYVEAVNELRVYKSQLEQIESEILSAKEEYQLVTQLFKNEILDKLRQTTDNIGLLTLELAKNEERQQASVIRAPVSVKVQQLKVHTEGGVVTTAETLMVIVPEDDTLEVTALVQNKDIGFINVGQNAIIKVEAFPYTRYGYLVGKVKNINLDAIEDQRLGLVFNVIISIEENCLSTGNKNIPLSSGMAVTAEIKTGMRSVISYLLSPLEESVTESLRER.

Topologically, residues 1 to 59 (MKTWLMGFSEFLLRYKLVWSETWKIRKQLDTPVREKDENEFLPAHLELIETPVSRRPRL) are cytoplasmic. The helical; Signal-anchor for type II membrane protein transmembrane segment at 60–80 (VAYFIMGFLVIAFILSVLGQV) threads the bilayer. The Periplasmic portion of the chain corresponds to 81-478 (EIVATANGKL…ESVTESLRER (398 aa)).

Belongs to the membrane fusion protein (MFP) (TC 8.A.1) family.

The protein localises to the cell inner membrane. Functionally, involved in the transport of hemolysin A. The polypeptide is Hemolysin secretion protein D, plasmid (hlyD) (Escherichia coli).